The following is a 229-amino-acid chain: Cytidylate kinase (229 aa).

12–20 (GPSGVGKST) is an ATP binding site.

It belongs to the cytidylate kinase family. Type 1 subfamily.

The protein localises to the cytoplasm. It catalyses the reaction CMP + ATP = CDP + ADP. It carries out the reaction dCMP + ATP = dCDP + ADP. The chain is Cytidylate kinase from Mesomycoplasma hyopneumoniae (strain 7448) (Mycoplasma hyopneumoniae).